The primary structure comprises 285 residues: 2-methoxy-6-polyprenyl-1,4-benzoquinol methylase, mitochondrial (285 aa).

The transit peptide at 1–30 directs the protein to the mitochondrion; sequence MKGATNLFKSMRKPTNVGNFRQFSVNQVNS. Residues T106, D126, 156-157, and S173 contribute to the S-adenosyl-L-methionine site; that span reads NA.

It belongs to the class I-like SAM-binding methyltransferase superfamily. MenG/UbiE family. Component of a multi-subunit COQ enzyme complex.

Its subcellular location is the mitochondrion inner membrane. It catalyses the reaction a 2-methoxy-6-(all-trans-polyprenyl)benzene-1,4-diol + S-adenosyl-L-methionine = a 5-methoxy-2-methyl-3-(all-trans-polyprenyl)benzene-1,4-diol + S-adenosyl-L-homocysteine + H(+). It functions in the pathway cofactor biosynthesis; ubiquinone biosynthesis. Methyltransferase required for the conversion of 2-polyprenyl-6-methoxy-1,4-benzoquinol (DDMQH2) to 2-polyprenyl-3-methyl-6-methoxy-1,4-benzoquinol (DMQH2). This is 2-methoxy-6-polyprenyl-1,4-benzoquinol methylase, mitochondrial from Caenorhabditis elegans.